A 231-amino-acid chain; its full sequence is Putative carboxymethylenebutenolidase (231 aa).

Active-site residues include D169 and H200.

This sequence belongs to the dienelactone hydrolase family.

It catalyses the reaction 2-(5-oxo-2,5-dihydrofuran-2-ylidene)acetate + H2O = 4-oxohex-2-enedioate + H(+). In Azospirillum brasilense, this protein is Putative carboxymethylenebutenolidase.